The sequence spans 303 residues: Probable RuBisCO transcriptional regulator (303 aa).

Residues Phe6–Thr63 enclose the HTH lysR-type domain. A DNA-binding region (H-T-H motif) is located at residues Phe23–Gln42.

The protein belongs to the LysR transcriptional regulatory family.

Its subcellular location is the plastid. It localises to the chloroplast. Trans-acting transcriptional regulator of RuBisCO genes (rbcL and rbcS) expression. In Cyanidioschyzon merolae (strain NIES-3377 / 10D) (Unicellular red alga), this protein is Probable RuBisCO transcriptional regulator (rbcR).